Consider the following 160-residue polypeptide: Phosphopantetheine adenylyltransferase (160 aa).

S9 is a substrate binding site. ATP is bound by residues 9–10 and H17; that span reads SF. Residues K41, V73, and K87 each contribute to the substrate site. ATP is bound by residues 88-90, E98, and 122-128; these read GLR and YSFVSSS.

This sequence belongs to the bacterial CoaD family. As to quaternary structure, homohexamer. Requires Mg(2+) as cofactor.

The protein resides in the cytoplasm. It catalyses the reaction (R)-4'-phosphopantetheine + ATP + H(+) = 3'-dephospho-CoA + diphosphate. Its pathway is cofactor biosynthesis; coenzyme A biosynthesis; CoA from (R)-pantothenate: step 4/5. Its function is as follows. Reversibly transfers an adenylyl group from ATP to 4'-phosphopantetheine, yielding dephospho-CoA (dPCoA) and pyrophosphate. This is Phosphopantetheine adenylyltransferase from Mycobacterium avium (strain 104).